Consider the following 262-residue polypeptide: Transcription factor bHLH81 (262 aa).

Positions Met1–Leu29 are disordered. A compositionally biased stretch (gly residues) spans Ser8–Ser25. Positions Cys190 to Leu240 constitute a bHLH domain.

As to quaternary structure, homodimer. In terms of tissue distribution, expressed in flowers.

It is found in the nucleus. This chain is Transcription factor bHLH81 (BHLH81), found in Arabidopsis thaliana (Mouse-ear cress).